A 216-amino-acid polypeptide reads, in one-letter code: Uracil phosphoribosyltransferase (216 aa).

GTP contacts are provided by residues arginine 32, arginine 41, 75-78 (MGKI), and lysine 77. Position 82 is a phosphoserine (serine 82). Arginine 85 contacts 5-phospho-alpha-D-ribose 1-diphosphate. A GTP-binding site is contributed by arginine 102. Arginine 110 contacts 5-phospho-alpha-D-ribose 1-diphosphate. GTP is bound at residue arginine 131. 5-phospho-alpha-D-ribose 1-diphosphate is bound by residues aspartate 137 and 137-145 (DPMLATGGS). Residue tyrosine 201 coordinates D-ribose 5-phosphate. Uracil-binding positions include leucine 202 and 207-209 (GDF). 5-phospho-alpha-D-ribose 1-diphosphate is bound at residue aspartate 208.

It belongs to the UPRTase family. The cofactor is Mg(2+).

The enzyme catalyses UMP + diphosphate = 5-phospho-alpha-D-ribose 1-diphosphate + uracil. It participates in pyrimidine metabolism; UMP biosynthesis via salvage pathway; UMP from uracil: step 1/1. Allosterically activated by GTP. Functionally, catalyzes the conversion of uracil and 5-phospho-alpha-D-ribose 1-diphosphate (PRPP) to UMP and diphosphate in the pyrimidine salvage pathway. The polypeptide is Uracil phosphoribosyltransferase (FUR1) (Saccharomyces cerevisiae (strain ATCC 204508 / S288c) (Baker's yeast)).